Consider the following 122-residue polypeptide: Large ribosomal subunit protein uL14 (122 aa).

Belongs to the universal ribosomal protein uL14 family. Part of the 50S ribosomal subunit. Forms a cluster with proteins L3 and L19. In the 70S ribosome, L14 and L19 interact and together make contacts with the 16S rRNA in bridges B5 and B8.

Binds to 23S rRNA. Forms part of two intersubunit bridges in the 70S ribosome. The polypeptide is Large ribosomal subunit protein uL14 (Shewanella sp. (strain ANA-3)).